We begin with the raw amino-acid sequence, 701 residues long: Heterodisulfide reductase subunit A-like protein (701 aa).

152 to 175 (GGGIAGIFAALDIANAGYKVYLVE) contacts FAD. Positions 239–268 (KQTWVDWDLCTGCGACTDVCPPKARVPDEF) constitute a 4Fe-4S ferredoxin-type 1 domain. Cysteine 248, cysteine 251, cysteine 254, cysteine 326, cysteine 627, cysteine 630, cysteine 633, cysteine 637, cysteine 660, cysteine 663, cysteine 666, and cysteine 670 together coordinate [4Fe-4S] cluster. 4Fe-4S ferredoxin-type domains follow at residues 618–647 (LVSEVDKEKCSGCGICVPLCPYGAITMTKY) and 651–680 (MRAEINPALCKGCGVCAAACPSKAIKLHGF).

The protein belongs to the HdrA family. In terms of assembly, the heterodisulfide reductase is composed of three subunits; HdlA, HdlB and HdlC. It forms a complex with the F420-non-reducing hydrogenase (Mvh), which provides the reducing equivalents to the heterodisulfide reductase. [4Fe-4S] cluster serves as cofactor. It depends on FAD as a cofactor.

Its subcellular location is the cytoplasm. Functionally, has oxidoreductase activity. The Hdl and Mvh subunits may together mediate electron transfer from hydrogen to an unidentified electron acceptor on the cytoplasmic side of the membrane. The chain is Heterodisulfide reductase subunit A-like protein (hdlA) from Archaeoglobus profundus (strain DSM 5631 / JCM 9629 / NBRC 100127 / Av18).